Here is a 133-residue protein sequence, read N- to C-terminus: Transcription antitermination protein NusB (133 aa).

The protein belongs to the NusB family.

Its function is as follows. Involved in transcription antitermination. Required for transcription of ribosomal RNA (rRNA) genes. Binds specifically to the boxA antiterminator sequence of the ribosomal RNA (rrn) operons. The polypeptide is Transcription antitermination protein NusB (Clostridium novyi (strain NT)).